The chain runs to 97 residues: Putative septation protein SpoVG (97 aa).

The protein belongs to the SpoVG family.

In terms of biological role, essential for sporulation. Interferes with or is a negative regulator of the pathway leading to asymmetric septation. In Bacillus licheniformis (strain ATCC 14580 / DSM 13 / JCM 2505 / CCUG 7422 / NBRC 12200 / NCIMB 9375 / NCTC 10341 / NRRL NRS-1264 / Gibson 46), this protein is Putative septation protein SpoVG.